The following is a 335-amino-acid chain: GTPase Obg (335 aa).

The region spanning 1–159 is the Obg domain; sequence MKFVDSASIR…REIGLELSIM (159 aa). Residues 160-332 form the OBG-type G domain; it reads ADIGLLGMPN…LVAGLFKLVK (173 aa). Residues 166 to 173, 191 to 195, 212 to 215, 282 to 285, and 313 to 315 each bind GTP; these read GMPNAGKS, FTTLH, DIPG, NKMD, and SAL. 2 residues coordinate Mg(2+): serine 173 and threonine 193.

It belongs to the TRAFAC class OBG-HflX-like GTPase superfamily. OBG GTPase family. As to quaternary structure, monomer. It depends on Mg(2+) as a cofactor.

The protein localises to the cytoplasm. An essential GTPase which binds GTP, GDP and possibly (p)ppGpp with moderate affinity, with high nucleotide exchange rates and a fairly low GTP hydrolysis rate. Plays a role in control of the cell cycle, stress response, ribosome biogenesis and in those bacteria that undergo differentiation, in morphogenesis control. This is GTPase Obg from Ruthia magnifica subsp. Calyptogena magnifica.